A 581-amino-acid polypeptide reads, in one-letter code: MVRNLDDLDFHLPSHAQDMLEGLQRLRSLPKLADVTLLVGDQELPCHRSLLALNSPYFHAMFAGDFTESFLARVELRDVEPAMVGQLVDFVYTGRLTITQANVEALTRSASRLNFPTVQKVCGRYLQQQLDATNCLGICEFGEQQGLLGVAAKAWAFLRENFEAVAQEDEFLQLARDRLATCLASDLLQVQPEQSRLEALLRWVRHDPQDRAAHLPELLSLVHLDAVPRPCVQQLLATEPLIQESEACQEALSQGHSEELPGLPQKMQEVLVVVGGRALEEDEDGGEEPSHHTGNFAFYNTKARQWMALPDFPDYHKWGFSLAALNSDVYVTGGSRGTKTDTWSTTQAWCFPLKEAIWKPVAPMLKARTNHASTALNGEIYAIGGTALDAVEVERYDPYTDSWAPVGPAPKYVSNFSAAGCQGRLYLVGSSACKYNMLALQCYSPVTDAWSVIASPFLPKYLSSPRCAALNGALYLIGDNTKKVYVYDPGANLWQKVQSQHSLHENGALVPLGDLLYVTGGRWQGMDGDYHVEMEAYDTVRDAWARHGSLPRLWLYHGASTIFLDVSKWTQPFIPTAPQEH.

Positions 33–100 constitute a BTB domain; it reads ADVTLLVGDQ…VYTGRLTITQ (68 aa). Residues 135-237 form the BACK domain; sequence CLGICEFGEQ…PRPCVQQLLA (103 aa). Kelch repeat units lie at residues 280-327, 328-378, 379-423, 425-472, 474-514, and 515-564; these read EEDE…ALNS, DVYV…ALNG, EIYA…GCQG, LYLV…ALNG, LYLI…PLGD, and LLYV…TIFL.

This is Kelch-like protein 30 (Klhl30) from Mus musculus (Mouse).